Reading from the N-terminus, the 124-residue chain is MTTIAAAGLNVATPRVVVRPVARVLGPVRLNYPWKFGSMKRMVVVKATSEGEISEKVEKSIQEAKETCADDPVSGECVAAWDEVEELSAAASHARDKKKAGGSDPLEEYCNDNPETDECRTYDN.

A chloroplast-targeting transit peptide spans 1–47; the sequence is MTTIAAAGLNVATPRVVVRPVARVLGPVRLNYPWKFGSMKRMVVVKA. 2 cysteine pairs are disulfide-bonded: Cys-68/Cys-77 and Cys-110/Cys-119. The disordered stretch occupies residues 90–124; sequence AASHARDKKKAGGSDPLEEYCNDNPETDECRTYDN. The segment covering 105–116 has biased composition (acidic residues); that stretch reads PLEEYCNDNPET.

Belongs to the CP12 family. In terms of assembly, monomer. Component of a complex that contains two dimers of PRK, two tetramers of GAPDH and CP12. CP12 associates with GAPDH, causing its conformation to change. This GAPDH/CP12 complex binds PRK to form a half-complex (one unit). This unit probably dimerizes due partially to interactions between the enzymes of each unit. In terms of processing, contains two disulfide bonds; only the oxidized protein, with two disulfide bonds, is active in complex formation. The C-terminal disulfide is involved in the interaction with GAPDH and the N-terminal disulfide mediates the binding of PRK with this binary complex. In terms of tissue distribution, mostly expressed in flowers, hypocotyl, cotyledons, leaves, stems, and flower stalks. Barely detectable in roots and siliques. Present in root tips and lateral roots. Accumulates in the cotyledons of etiolated seedlings.

The protein resides in the plastid. The protein localises to the chloroplast. Its function is as follows. Acts as a linker essential in the assembly of a core complex of PRK/GAPDH. Coordinates the reversible inactivation of chloroplast enzymes GAPDH and PRK during darkness in photosynthetic tissues. The polypeptide is Calvin cycle protein CP12-1, chloroplastic (CP12-1) (Arabidopsis thaliana (Mouse-ear cress)).